The sequence spans 181 residues: NADH-quinone oxidoreductase subunit B (181 aa).

The [4Fe-4S] cluster site is built by cysteine 45, cysteine 46, cysteine 111, and cysteine 140.

It belongs to the complex I 20 kDa subunit family. In terms of assembly, NDH-1 is composed of 15 different subunits. Subunits NuoB, C, D, E, F, and G constitute the peripheral sector of the complex. The cofactor is [4Fe-4S] cluster.

The protein resides in the cell membrane. The enzyme catalyses a quinone + NADH + 5 H(+)(in) = a quinol + NAD(+) + 4 H(+)(out). In terms of biological role, NDH-1 shuttles electrons from NADH, via FMN and iron-sulfur (Fe-S) centers, to quinones in the respiratory chain. The immediate electron acceptor for the enzyme in this species is believed to be a menaquinone. Couples the redox reaction to proton translocation (for every two electrons transferred, four hydrogen ions are translocated across the cytoplasmic membrane), and thus conserves the redox energy in a proton gradient. The polypeptide is NADH-quinone oxidoreductase subunit B (Deinococcus radiodurans (strain ATCC 13939 / DSM 20539 / JCM 16871 / CCUG 27074 / LMG 4051 / NBRC 15346 / NCIMB 9279 / VKM B-1422 / R1)).